Here is a 92-residue protein sequence, read N- to C-terminus: Small ribosomal subunit protein uS19 (92 aa).

This sequence belongs to the universal ribosomal protein uS19 family.

Its function is as follows. Protein S19 forms a complex with S13 that binds strongly to the 16S ribosomal RNA. This is Small ribosomal subunit protein uS19 from Corynebacterium efficiens (strain DSM 44549 / YS-314 / AJ 12310 / JCM 11189 / NBRC 100395).